Consider the following 900-residue polypeptide: MSENIKQGGAGTFMQAPQDSVPLPPKDAEVMTTACDYCTVACGYKVYRWPVGKEGGMKAKDNAFNADFPHQQIFGAWASPAQHNIVNHNGRSHHVLVLPDRDTTVVNPGGNHSIRGGTLAQKCYNPSNRTSERLLYPMIRVRGTLMPVSWDLATEVMADISQYILAKYGEHAWAMKTYSYQYFENTYAITKLGMTSIGTPAFAWHDKASATNDATGLDDAGVNSFASSDQDWADCEVAFLSGVDPYETKTTLFTQWMMPGDKKFIFVTPHRTMGVAWAESTGRGMWLPIIPGTDTVLHLALARIIVENGWQDQAFIDKWVANKWEVDSGYGRGTRNTGWQWRTTWGKWQSDWKDYSAWILKQKEGELETAAKITGLRAEDIRKAAEWIAKPKADGTRVKASFMLEKGNYWTNNYMNSASLASLGLICGSGNRPGQMISRGGGHQRGGMSAGGGSGWLSPEKYPGRRKKSFNLDRWMMNGNVRFAWVIGTTWTAAMMASQALQDKMFSLTRGNPHQISSLDRKAIFETLKQRVDSGGTVIANSDIYPCVPVGTEYADIVLPAATWGEDNFTRCNSERRLRLYSKFYDAPGEAKPDWWIIAKFAQKMGYDKDGSYQWKNSNDVFEEAARFGRNGVLNYHPLVVKAKEKGVKGHELLRTYGTDGIQTPIRMKDGELVGTQRLHDPANDWDEVEGQEVKRKWLYAFGTHSGKAILLKTPWDYPGWSQFYKAALPRKEKGEVWVTNGRVNETWQSGFDDLRKPYLSQRWPYPMLIMHPDEAKPRGIESGDFVQVYNDTVYIQMGEPQGVKEDDLYFDTLMKNGHIKTTDGQFVAVAIVSEEMRPGVVMANFNYPQAPANSVVHAVPDPMTNNYRYKLGRGVLTKVGESPYKHSFTSMTLKPRDIV.

Positions 1-21 (MSENIKQGGAGTFMQAPQDSV) are disordered. [3Fe-4S] cluster is bound by residues Cys35, Cys38, and Cys42.

Belongs to the prokaryotic molybdopterin-containing oxidoreductase family. The iodate reductase (Idr) complex is composed of a molybdopterin-dependent iodate reductase (IdrA and IdrB subunits) and two associated peroxidases (IdrP1 and IdrP2). It depends on [3Fe-4S] cluster as a cofactor. Requires Mo-bis(molybdopterin guanine dinucleotide) as cofactor.

The protein localises to the periplasm. Its function is as follows. Involved in iodate respiration. May accept electrons from cytochrome c551, and catalyze the reduction of iodate (IO(3)(-)) to produce the chemically unstable intermediate hypoiodous acid (HIO). This intermediate then undergoes abiotic disproportionation to yield two molecules of iodide (I(-)) and one molecule of iodate. The resultant iodate subsequently cycles back into the reductive pathway. The initial reduction of iodate may inadvertently produce low levels of incidental toxic H(2)O(2), which is detoxified by IdrP1 and IdrP2. The protein is Iodate reductase subunit IdrA of Denitromonas iodatirespirans.